The following is a 131-amino-acid chain: Small ribosomal subunit protein uS8 (131 aa).

Belongs to the universal ribosomal protein uS8 family. Part of the 30S ribosomal subunit. Contacts proteins S5 and S12.

Its function is as follows. One of the primary rRNA binding proteins, it binds directly to 16S rRNA central domain where it helps coordinate assembly of the platform of the 30S subunit. The chain is Small ribosomal subunit protein uS8 from Azobacteroides pseudotrichonymphae genomovar. CFP2.